Here is a 255-residue protein sequence, read N- to C-terminus: Probable transcriptional regulatory protein Rcas_0718 (255 aa).

Belongs to the TACO1 family.

The protein localises to the cytoplasm. This Roseiflexus castenholzii (strain DSM 13941 / HLO8) protein is Probable transcriptional regulatory protein Rcas_0718.